The primary structure comprises 268 residues: Esterase GME11355 (268 aa).

Active-site charge relay system residues include Ser122, Asp212, and His240.

It belongs to the LovG family.

It functions in the pathway secondary metabolite biosynthesis. In terms of biological role, esterase; part of the gene cluster that mediates the biosynthesis of dibenzodioxocinones such as pestalotiollide B, a novel class of inhibitors against cholesterol ester transfer protein (CEPT). The biosynthesis initiates from condensation of acetate and malonate units catalyzed by the non-reducing PKS pks8/GME11356. Pks8/GME11356 lacks a thioesterase (TE) domain, which is important to the cyclizing of the third ring of atrochrysone carboxylic acid, and the esterase GME11355 might play the role of TE and catalyzes the cyclization reaction of the C ring. The lactamase-like protein GME11357 (or other beta-lactamases in Pestalotiopsis microspora) probably hydrolyzes the thioester bond between the ACP of pks8/GME11356 and the intermediate to release atrochrysone carboxylic acid, which is spontaneously dehydrates to form endocrocin anthrone. Endocrocin anthrone is further converted to emodin via the endocrocin intermediate. Emodin is then oxidized by several enzymes such as the Baeyer-Villiger oxidase GME11358, the oxidoreductase GME11367, the short chain dehydrogenase/reductase GME11373, as well as by other oxidoreductases from the cluster, to modify the A and C rings and open the B ring, and finally yield monodictyphenone. The prenyltransferase GME11375 may catalyze the addition reaction between the C5 side chains and the carbon bone of dibenzodioxocinones. The remaining biochemical reactions to the final product dibenzodioxocinones should be methylation catalyzed by methyltransferase GME11366 and reduction and lactonization reaction catalyzed by a series of oxidordeuctases. The sequence is that of Esterase GME11355 from Pestalotiopsis microspora.